A 310-amino-acid chain; its full sequence is Methionyl-tRNA formyltransferase (310 aa).

110-113 is a (6S)-5,6,7,8-tetrahydrofolate binding site; sequence SLLP.

This sequence belongs to the Fmt family.

The enzyme catalyses L-methionyl-tRNA(fMet) + (6R)-10-formyltetrahydrofolate = N-formyl-L-methionyl-tRNA(fMet) + (6S)-5,6,7,8-tetrahydrofolate + H(+). In terms of biological role, attaches a formyl group to the free amino group of methionyl-tRNA(fMet). The formyl group appears to play a dual role in the initiator identity of N-formylmethionyl-tRNA by promoting its recognition by IF2 and preventing the misappropriation of this tRNA by the elongation apparatus. This chain is Methionyl-tRNA formyltransferase, found in Halorhodospira halophila (strain DSM 244 / SL1) (Ectothiorhodospira halophila (strain DSM 244 / SL1)).